We begin with the raw amino-acid sequence, 274 residues long: Hydroxyethylthiazole kinase (274 aa).

A substrate-binding site is contributed by M49. R125 and T173 together coordinate ATP. Residue G200 participates in substrate binding.

Belongs to the Thz kinase family. It depends on Mg(2+) as a cofactor.

It carries out the reaction 5-(2-hydroxyethyl)-4-methylthiazole + ATP = 4-methyl-5-(2-phosphooxyethyl)-thiazole + ADP + H(+). The protein operates within cofactor biosynthesis; thiamine diphosphate biosynthesis; 4-methyl-5-(2-phosphoethyl)-thiazole from 5-(2-hydroxyethyl)-4-methylthiazole: step 1/1. Functionally, catalyzes the phosphorylation of the hydroxyl group of 4-methyl-5-beta-hydroxyethylthiazole (THZ). In Desulfosudis oleivorans (strain DSM 6200 / JCM 39069 / Hxd3) (Desulfococcus oleovorans), this protein is Hydroxyethylthiazole kinase.